Reading from the N-terminus, the 572-residue chain is Probable terpene synthase 11 (572 aa).

Residues aspartate 317, aspartate 321, and glutamate 469 each coordinate Mg(2+). The DDXXD motif signature appears at 317 to 321; it reads DDIFD.

It belongs to the terpene synthase family. It depends on Mg(2+) as a cofactor.

Functionally, probable sesquiterpene synthase. This Ricinus communis (Castor bean) protein is Probable terpene synthase 11 (TPS11).